The primary structure comprises 175 residues: Methylated-DNA--protein-cysteine methyltransferase (175 aa).

C142 acts as the Nucleophile; methyl group acceptor in catalysis.

It belongs to the MGMT family.

Its subcellular location is the cytoplasm. The enzyme catalyses a 6-O-methyl-2'-deoxyguanosine in DNA + L-cysteinyl-[protein] = S-methyl-L-cysteinyl-[protein] + a 2'-deoxyguanosine in DNA. It carries out the reaction a 4-O-methyl-thymidine in DNA + L-cysteinyl-[protein] = a thymidine in DNA + S-methyl-L-cysteinyl-[protein]. Functionally, involved in the cellular defense against the biological effects of O6-methylguanine (O6-MeG) and O4-methylthymine (O4-MeT) in DNA. Repairs the methylated nucleobase in DNA by stoichiometrically transferring the methyl group to a cysteine residue in the enzyme. This is a suicide reaction: the enzyme is irreversibly inactivated. This is Methylated-DNA--protein-cysteine methyltransferase from Thermococcus sibiricus (strain DSM 12597 / MM 739).